Reading from the N-terminus, the 112-residue chain is T cell receptor alpha variable 9-1 (112 aa).

Positions 1 to 20 (MNSSPGPAIALFLMFGGING) are cleaved as a signal peptide. One can recognise an Ig-like domain in the interval 21–112 (DSVVQTEGQV…DSAVYFCALS (92 aa)). Asparagine 41 carries an N-linked (GlcNAc...) asparagine glycan. Cysteine 42 and cysteine 109 are joined by a disulfide.

In terms of assembly, alpha-beta TR is a heterodimer composed of an alpha and beta chain; disulfide-linked. The alpha-beta TR is associated with the transmembrane signaling CD3 coreceptor proteins to form the TR-CD3 (TcR or TCR). The assembly of alpha-beta TR heterodimers with CD3 occurs in the endoplasmic reticulum where a single alpha-beta TR heterodimer associates with one CD3D-CD3E heterodimer, one CD3G-CD3E heterodimer and one CD247 homodimer forming a stable octameric structure. CD3D-CD3E and CD3G-CD3E heterodimers preferentially associate with TR alpha and TR beta chains, respectively. The association of the CD247 homodimer is the last step of TcR assembly in the endoplasmic reticulum and is required for transport to the cell surface.

The protein resides in the cell membrane. Its function is as follows. V region of the variable domain of T cell receptor (TR) alpha chain that participates in the antigen recognition. Alpha-beta T cell receptors are antigen specific receptors which are essential to the immune response and are present on the cell surface of T lymphocytes. Recognize peptide-major histocompatibility (MH) (pMH) complexes that are displayed by antigen presenting cells (APC), a prerequisite for efficient T cell adaptive immunity against pathogens. Binding of alpha-beta TR to pMH complex initiates TR-CD3 clustering on the cell surface and intracellular activation of LCK that phosphorylates the ITAM motifs of CD3G, CD3D, CD3E and CD247 enabling the recruitment of ZAP70. In turn ZAP70 phosphorylates LAT, which recruits numerous signaling molecules to form the LAT signalosome. The LAT signalosome propagates signal branching to three major signaling pathways, the calcium, the mitogen-activated protein kinase (MAPK) kinase and the nuclear factor NF-kappa-B (NF-kB) pathways, leading to the mobilization of transcription factors that are critical for gene expression and essential for T cell growth and differentiation. The T cell repertoire is generated in the thymus, by V-(D)-J rearrangement. This repertoire is then shaped by intrathymic selection events to generate a peripheral T cell pool of self-MH restricted, non-autoaggressive T cells. Post-thymic interaction of alpha-beta TR with the pMH complexes shapes TR structural and functional avidity. This Homo sapiens (Human) protein is T cell receptor alpha variable 9-1.